Consider the following 335-residue polypeptide: Ornithine carbamoyltransferase (335 aa).

Residues 56–59, Q83, R107, and 134–137 each bind carbamoyl phosphate; these read STRT and HPTQ. L-ornithine-binding positions include N168, D232, and 236–237; that span reads SM. Carbamoyl phosphate is bound by residues 274 to 275 and R320; that span reads CL.

Belongs to the aspartate/ornithine carbamoyltransferase superfamily. OTCase family.

It localises to the cytoplasm. It carries out the reaction carbamoyl phosphate + L-ornithine = L-citrulline + phosphate + H(+). The protein operates within amino-acid biosynthesis; L-arginine biosynthesis; L-arginine from L-ornithine and carbamoyl phosphate: step 1/3. In terms of biological role, reversibly catalyzes the transfer of the carbamoyl group from carbamoyl phosphate (CP) to the N(epsilon) atom of ornithine (ORN) to produce L-citrulline. The sequence is that of Ornithine carbamoyltransferase from Yersinia pestis bv. Antiqua (strain Nepal516).